Here is a 306-residue protein sequence, read N- to C-terminus: Glutaminase (306 aa).

Substrate is bound by residues S61, N111, E157, N164, Y188, Y240, and V258.

Belongs to the glutaminase family. In terms of assembly, homotetramer.

It carries out the reaction L-glutamine + H2O = L-glutamate + NH4(+). The chain is Glutaminase from Pseudoalteromonas atlantica (strain T6c / ATCC BAA-1087).